Here is a 478-residue protein sequence, read N- to C-terminus: MTRFLFAIILGFLLTACQQVTVEETEYVPHKLTELRVGTLYGPQIYMTSGQGNSGFDYDMAVLFAEYLDVPLKMVPYTNRAELYDALKKNEIDIIAAGMTETPARREQFRLGPPLYRVNQVLVYREGMPTPKDITDLKGKITVIADSSFVETLTQLQKRHPTLVWDQVTDKDSEELLAMIANKEIDYTIADSSSVQINRRYLPDLRSGLVLEEKLDVVWLLPPTHSDGLMSQLLAFWHQEKLAGTLDHLNEKYFGHVKRFDYIDTRAFLRAIETVLPRYRQLFETHAGDLDWRKLAATSYQESHWNPNARSPTGVRGMMMLTQPTAKEIGITNRLDAEESIRGGAAYLRDMINRLPESIPESQRMWFALASYNIGYAHVEDARKLAESMELNPNAWRDLKKVLPLLQKRKYYQKTRYGYARGSEAVHYVDSIRRYYDTLVWVDNQSKQQNSDEEEPSDLASEDGPAPVPGTLSPDKPK.

The first 22 residues, M1 to V22, serve as a signal peptide directing secretion. The non-LT domain stretch occupies residues E23–V257. The LT domain stretch occupies residues K258–K478. The active site involves E302. Residues S446–K478 form a disordered region. Residues S451–S461 are compositionally biased toward acidic residues.

It in the N-terminal section; belongs to the bacterial solute-binding protein 3 family. The protein in the C-terminal section; belongs to the transglycosylase Slt family.

The protein localises to the cell outer membrane. It catalyses the reaction Exolytic cleavage of the (1-&gt;4)-beta-glycosidic linkage between N-acetylmuramic acid (MurNAc) and N-acetylglucosamine (GlcNAc) residues in peptidoglycan, from either the reducing or the non-reducing ends of the peptidoglycan chains, with concomitant formation of a 1,6-anhydrobond in the MurNAc residue.. Functionally, murein-degrading enzyme that degrades murein glycan strands and insoluble, high-molecular weight murein sacculi, with the concomitant formation of a 1,6-anhydromuramoyl product. Lytic transglycosylases (LTs) play an integral role in the metabolism of the peptidoglycan (PG) sacculus. Their lytic action creates space within the PG sacculus to allow for its expansion as well as for the insertion of various structures such as secretion systems and flagella. This is Membrane-bound lytic murein transglycosylase F from Shewanella sp. (strain ANA-3).